The chain runs to 293 residues: ELMO domain-containing protein 2 (293 aa).

The region spanning 126–282 is the ELMO domain; sequence QHEKMLLKLW…KFHERIKGLL (157 aa).

In terms of biological role, acts as a GTPase-activating protein (GAP) toward guanine nucleotide exchange factors like ARL2, ARL3, ARF1 and ARF6, but not for GTPases outside the Arf family. This chain is ELMO domain-containing protein 2 (Elmod2), found in Mus musculus (Mouse).